The primary structure comprises 415 residues: Lipid-A-disaccharide synthase (415 aa).

Positions 1-21 are disordered; it reads MNSLPESGSDGQSSADPSQKA.

This sequence belongs to the LpxB family.

It carries out the reaction a lipid X + a UDP-2-N,3-O-bis[(3R)-3-hydroxyacyl]-alpha-D-glucosamine = a lipid A disaccharide + UDP + H(+). Its pathway is bacterial outer membrane biogenesis; LPS lipid A biosynthesis. Its function is as follows. Condensation of UDP-2,3-diacylglucosamine and 2,3-diacylglucosamine-1-phosphate to form lipid A disaccharide, a precursor of lipid A, a phosphorylated glycolipid that anchors the lipopolysaccharide to the outer membrane of the cell. In Gluconobacter oxydans (strain 621H) (Gluconobacter suboxydans), this protein is Lipid-A-disaccharide synthase.